We begin with the raw amino-acid sequence, 406 residues long: Argininosuccinate synthase (406 aa).

Residues 11 to 19 (AYSGGLDTS) and A38 each bind ATP. Positions 91 and 96 each coordinate L-citrulline. Residue G121 participates in ATP binding. L-aspartate contacts are provided by T123, N127, and D128. N127 contributes to the L-citrulline binding site. L-citrulline is bound by residues R131, S181, S190, E266, and Y278.

Belongs to the argininosuccinate synthase family. Type 1 subfamily. Homotetramer.

The protein localises to the cytoplasm. The catalysed reaction is L-citrulline + L-aspartate + ATP = 2-(N(omega)-L-arginino)succinate + AMP + diphosphate + H(+). Its pathway is amino-acid biosynthesis; L-arginine biosynthesis; L-arginine from L-ornithine and carbamoyl phosphate: step 2/3. This is Argininosuccinate synthase from Campylobacter hominis (strain ATCC BAA-381 / DSM 21671 / CCUG 45161 / LMG 19568 / NCTC 13146 / CH001A).